We begin with the raw amino-acid sequence, 859 residues long: Leucine--tRNA ligase (859 aa).

Residues 42 to 52 (PYPSGRLHMGH) carry the 'HIGH' region motif. A 'KMSKS' region motif is present at residues 618-622 (KMSKS). Lys621 serves as a coordination point for ATP.

The protein belongs to the class-I aminoacyl-tRNA synthetase family.

The protein localises to the cytoplasm. It carries out the reaction tRNA(Leu) + L-leucine + ATP = L-leucyl-tRNA(Leu) + AMP + diphosphate. In Shewanella baltica (strain OS155 / ATCC BAA-1091), this protein is Leucine--tRNA ligase.